The primary structure comprises 1296 residues: Phosphoribosylformylglycinamidine synthase (1296 aa).

Residues 304–323 are disordered; it reads WPGAATGSGGEIRDEGATGR. Residues 306 to 317 and A677 each bind ATP; that span reads GAATGSGGEIRD. D678, E717, N721, and D885 together coordinate Mg(2+). Position 887 (S887) interacts with ATP. Residues 1000-1013 show a composition bias toward basic and acidic residues; the sequence is PDCADQEHQAKQDE. Residues 1000 to 1019 form a disordered region; the sequence is PDCADQEHQAKQDESDPGLN. In terms of domain architecture, Glutamine amidotransferase type-1 spans 1043-1296; that stretch reads VAVLREQGVN…MFRNARKQLG (254 aa). The active-site Nucleophile is C1136. Active-site residues include H1261 and E1263.

This sequence in the N-terminal section; belongs to the FGAMS family. Monomer.

It localises to the cytoplasm. It catalyses the reaction N(2)-formyl-N(1)-(5-phospho-beta-D-ribosyl)glycinamide + L-glutamine + ATP + H2O = 2-formamido-N(1)-(5-O-phospho-beta-D-ribosyl)acetamidine + L-glutamate + ADP + phosphate + H(+). It functions in the pathway purine metabolism; IMP biosynthesis via de novo pathway; 5-amino-1-(5-phospho-D-ribosyl)imidazole from N(2)-formyl-N(1)-(5-phospho-D-ribosyl)glycinamide: step 1/2. Functionally, phosphoribosylformylglycinamidine synthase involved in the purines biosynthetic pathway. Catalyzes the ATP-dependent conversion of formylglycinamide ribonucleotide (FGAR) and glutamine to yield formylglycinamidine ribonucleotide (FGAM) and glutamate. This Yersinia pestis bv. Antiqua (strain Antiqua) protein is Phosphoribosylformylglycinamidine synthase.